The chain runs to 424 residues: CinA-like protein (424 aa).

It belongs to the CinA family.

In Shewanella woodyi (strain ATCC 51908 / MS32), this protein is CinA-like protein.